The chain runs to 191 residues: Protein YceI (191 aa).

An N-terminal signal peptide occupies residues 1-22 (MKKSLLGLTFASLMFSAGSAVA).

The protein belongs to the UPF0312 family. Type 1 subfamily.

The protein resides in the periplasm. This is Protein YceI from Escherichia coli O6:H1 (strain CFT073 / ATCC 700928 / UPEC).